The chain runs to 497 residues: Histidine--tRNA ligase (497 aa).

It belongs to the class-II aminoacyl-tRNA synthetase family. Homodimer.

It localises to the cytoplasm. It carries out the reaction tRNA(His) + L-histidine + ATP = L-histidyl-tRNA(His) + AMP + diphosphate + H(+). This is Histidine--tRNA ligase from Dinoroseobacter shibae (strain DSM 16493 / NCIMB 14021 / DFL 12).